The following is a 175-amino-acid chain: CDP-archaeol synthase (175 aa).

4 helical membrane-spanning segments follow: residues 41 to 61, 82 to 102, 122 to 142, and 150 to 170; these read GLFS…WLSS, LIVV…KSFF, FVVG…VSNF, and VIII…LIGV.

It belongs to the CDP-archaeol synthase family. Mg(2+) serves as cofactor.

It is found in the cell membrane. It carries out the reaction 2,3-bis-O-(geranylgeranyl)-sn-glycerol 1-phosphate + CTP + H(+) = CDP-2,3-bis-O-(geranylgeranyl)-sn-glycerol + diphosphate. It functions in the pathway membrane lipid metabolism; glycerophospholipid metabolism. Its function is as follows. Catalyzes the formation of CDP-2,3-bis-(O-geranylgeranyl)-sn-glycerol (CDP-archaeol) from 2,3-bis-(O-geranylgeranyl)-sn-glycerol 1-phosphate (DGGGP) and CTP. This reaction is the third ether-bond-formation step in the biosynthesis of archaeal membrane lipids. The chain is CDP-archaeol synthase from Methanosarcina barkeri (strain Fusaro / DSM 804).